An 823-amino-acid chain; its full sequence is DNA ligase (823 aa).

Residues D31–D35 and S73–Q74 each bind NAD(+). K100 serves as the catalytic N6-AMP-lysine intermediate. 4 residues coordinate NAD(+): R121, E163, K275, and K296. Zn(2+) contacts are provided by C387, C390, C403, and C408. BRCT domains lie at Q562 to T655, E654 to V742, and H741 to T823.

It belongs to the NAD-dependent DNA ligase family. LigA subfamily. Mg(2+) serves as cofactor. It depends on Mn(2+) as a cofactor.

It catalyses the reaction NAD(+) + (deoxyribonucleotide)n-3'-hydroxyl + 5'-phospho-(deoxyribonucleotide)m = (deoxyribonucleotide)n+m + AMP + beta-nicotinamide D-nucleotide.. Functionally, DNA ligase that catalyzes the formation of phosphodiester linkages between 5'-phosphoryl and 3'-hydroxyl groups in double-stranded DNA using NAD as a coenzyme and as the energy source for the reaction. It is essential for DNA replication and repair of damaged DNA. The chain is DNA ligase from Treponema pallidum (strain Nichols).